Consider the following 261-residue polypeptide: L-erythrulose-1-phosphate isomerase (261 aa).

Catalysis depends on histidine 99, which acts as the Electrophile. Residue glutamate 172 is the Proton acceptor of the active site.

It belongs to the triosephosphate isomerase family.

It catalyses the reaction L-erythrulose 1-phosphate = D-erythrulose 4-phosphate. Its pathway is carbohydrate metabolism. Involved in catabolism of D-apiose. Catalyzes the isomerization of L-erythrulose 1-phosphate to D-erythrulose 4-phosphate. The chain is L-erythrulose-1-phosphate isomerase from Rhizobium rhizogenes (strain K84 / ATCC BAA-868) (Agrobacterium radiobacter).